A 280-amino-acid chain; its full sequence is Gem-associated protein 2 (280 aa).

Residues 1–39 (MRRAELAGLKTMAWVPAESAVEELMPRLLPVEPCDLTEG) are may play a minor inhibitory role in snRNA binding to 5Sm (SNRPD1, SNRPD2, SNRPE, SNRPF and SNRPG) during snRNP assembly by inserting into the RNA binding pocket of 5Sm. Phosphoserine occurs at positions 81 and 166.

It belongs to the gemin-2 family. Monomer. Part of the core SMN complex that contains SMN1, GEMIN2/SIP1, DDX20/GEMIN3, GEMIN4, GEMIN5, GEMIN6, GEMIN7, GEMIN8 and STRAP/UNRIP. Part of the SMN-Sm complex that contains SMN1, GEMIN2/SIP1, DDX20/GEMIN3, GEMIN4, GEMIN5, GEMIN6, GEMIN7, GEMIN8, STRAP/UNRIP and the Sm proteins SNRPB, SNRPD1, SNRPD2, SNRPD3, SNRPE, SNRPF and SNRPG. Interacts with GEMIN5; the interaction is direct. Interacts (via C-terminus) with SMN1; the interaction is direct. Interacts with SNRPD1; the interaction is direct. Interacts with SNRPD2; the interaction is direct. Interacts (via N-terminus) with SNRPF; the interaction is direct. Interacts (via N-terminus) with SNRPE; the interaction is direct. Interacts (via N-terminus) with SNRPG; the interaction is direct.

The protein resides in the nucleus. Its subcellular location is the gem. It is found in the cytoplasm. In terms of biological role, the SMN complex catalyzes the assembly of small nuclear ribonucleoproteins (snRNPs), the building blocks of the spliceosome, and thereby plays an important role in the splicing of cellular pre-mRNAs. Most spliceosomal snRNPs contain a common set of Sm proteins SNRPB, SNRPD1, SNRPD2, SNRPD3, SNRPE, SNRPF and SNRPG that assemble in a heptameric protein ring on the Sm site of the small nuclear RNA to form the core snRNP (Sm core). In the cytosol, the Sm proteins SNRPD1, SNRPD2, SNRPE, SNRPF and SNRPG (5Sm) are trapped in an inactive 6S pICln-Sm complex by the chaperone CLNS1A that controls the assembly of the core snRNP. To assemble core snRNPs, the SMN complex accepts the trapped 5Sm proteins from CLNS1A. Binding of snRNA inside 5Sm ultimately triggers eviction of the SMN complex, thereby allowing binding of SNRPD3 and SNRPB to complete assembly of the core snRNP. Within the SMN complex, GEMIN2 constrains the conformation of 5Sm, thereby promoting 5Sm binding to snRNA containing the snRNP code (a nonameric Sm site and a 3'-adjacent stem-loop), thus preventing progression of assembly until a cognate substrate is bound. The sequence is that of Gem-associated protein 2 from Homo sapiens (Human).